A 149-amino-acid polypeptide reads, in one-letter code: Heavy metal-associated isoprenylated plant protein 21 (149 aa).

The 64-residue stretch at 25-88 folds into the HMA domain; it reads LQTVDIKVKM…RVKSTGKKAE (64 aa). Residues Cys-36 and Cys-39 each coordinate a metal cation. Cys-146 is modified (cysteine methyl ester). Cys-146 carries S-farnesyl cysteine lipidation. The propeptide at 147–149 is removed in mature form; it reads SIM.

It belongs to the HIPP family. Interacts with ZHD11/HB29. Expressed at low levels in leaves and sepals.

It localises to the membrane. Heavy-metal-binding protein. Binds cadmium. May be involved in cadmium transport and play a role in cadmium detoxification. This chain is Heavy metal-associated isoprenylated plant protein 21, found in Arabidopsis thaliana (Mouse-ear cress).